A 136-amino-acid chain; its full sequence is Large ribosomal subunit protein uL16c (136 aa).

The protein belongs to the universal ribosomal protein uL16 family. In terms of assembly, part of the 50S ribosomal subunit.

The protein localises to the plastid. Its subcellular location is the chloroplast. The sequence is that of Large ribosomal subunit protein uL16c from Chlamydomonas sp. (strain WXM).